The primary structure comprises 716 residues: Antibacterial effector protein Tle3 (716 aa).

Positions 68 to 87 are disordered; sequence PTLPGGQANPGYLTPAGYSL.

In terms of assembly, interacts in the cytoplasm with the adapter protein Tla3. Interacts in the periplasm with the immunity protein Tli3.

The protein resides in the secreted. The protein localises to the host periplasm. With respect to regulation, neutralized by the immunity protein Tli3 in the periplasm of P.aeruginosa cells. Antibacterial effector. Is toxic once delivered in the periplasm of prey bacteria. The polypeptide is Antibacterial effector protein Tle3 (Pseudomonas aeruginosa (strain ATCC 15692 / DSM 22644 / CIP 104116 / JCM 14847 / LMG 12228 / 1C / PRS 101 / PAO1)).